The primary structure comprises 227 residues: Cytochrome c oxidase subunit 2 (227 aa).

Over Met-1–Ser-14 the chain is Mitochondrial intermembrane. The chain crosses the membrane as a helical span at residues Pro-15–Met-45. Residues Leu-46 to Gln-59 lie on the Mitochondrial matrix side of the membrane. The helical transmembrane segment at Glu-60–Met-87 threads the bilayer. Residues Asp-88 to Leu-227 lie on the Mitochondrial intermembrane side of the membrane. Cu cation contacts are provided by His-161, Cys-196, Glu-198, Cys-200, His-204, and Met-207. Glu-198 is a Mg(2+) binding site.

The protein belongs to the cytochrome c oxidase subunit 2 family. In terms of assembly, component of the cytochrome c oxidase (complex IV, CIV), a multisubunit enzyme composed of 14 subunits. The complex is composed of a catalytic core of 3 subunits MT-CO1, MT-CO2 and MT-CO3, encoded in the mitochondrial DNA, and 11 supernumerary subunits COX4I, COX5A, COX5B, COX6A, COX6B, COX6C, COX7A, COX7B, COX7C, COX8 and NDUFA4, which are encoded in the nuclear genome. The complex exists as a monomer or a dimer and forms supercomplexes (SCs) in the inner mitochondrial membrane with NADH-ubiquinone oxidoreductase (complex I, CI) and ubiquinol-cytochrome c oxidoreductase (cytochrome b-c1 complex, complex III, CIII), resulting in different assemblies (supercomplex SCI(1)III(2)IV(1) and megacomplex MCI(2)III(2)IV(2)). Found in a complex with TMEM177, COA6, COX18, COX20, SCO1 and SCO2. Interacts with TMEM177 in a COX20-dependent manner. Interacts with COX20. Interacts with COX16. It depends on Cu cation as a cofactor.

Its subcellular location is the mitochondrion inner membrane. The enzyme catalyses 4 Fe(II)-[cytochrome c] + O2 + 8 H(+)(in) = 4 Fe(III)-[cytochrome c] + 2 H2O + 4 H(+)(out). Functionally, component of the cytochrome c oxidase, the last enzyme in the mitochondrial electron transport chain which drives oxidative phosphorylation. The respiratory chain contains 3 multisubunit complexes succinate dehydrogenase (complex II, CII), ubiquinol-cytochrome c oxidoreductase (cytochrome b-c1 complex, complex III, CIII) and cytochrome c oxidase (complex IV, CIV), that cooperate to transfer electrons derived from NADH and succinate to molecular oxygen, creating an electrochemical gradient over the inner membrane that drives transmembrane transport and the ATP synthase. Cytochrome c oxidase is the component of the respiratory chain that catalyzes the reduction of oxygen to water. Electrons originating from reduced cytochrome c in the intermembrane space (IMS) are transferred via the dinuclear copper A center (CU(A)) of subunit 2 and heme A of subunit 1 to the active site in subunit 1, a binuclear center (BNC) formed by heme A3 and copper B (CU(B)). The BNC reduces molecular oxygen to 2 water molecules using 4 electrons from cytochrome c in the IMS and 4 protons from the mitochondrial matrix. The sequence is that of Cytochrome c oxidase subunit 2 (MT-CO2) from Dasypus novemcinctus (Nine-banded armadillo).